Reading from the N-terminus, the 292-residue chain is Small ribosomal subunit biogenesis GTPase RsgA (292 aa).

Residues 64–221 (RSELFRPAVA…LVDTPGFSSL (158 aa)) enclose the CP-type G domain. Residues 113-116 (NKMD) and 164-172 (GPSGVGKST) contribute to the GTP site. Positions 245, 250, 252, and 258 each coordinate Zn(2+).

The protein belongs to the TRAFAC class YlqF/YawG GTPase family. RsgA subfamily. Monomer. Associates with 30S ribosomal subunit, binds 16S rRNA. Requires Zn(2+) as cofactor.

Its subcellular location is the cytoplasm. One of several proteins that assist in the late maturation steps of the functional core of the 30S ribosomal subunit. Helps release RbfA from mature subunits. May play a role in the assembly of ribosomal proteins into the subunit. Circularly permuted GTPase that catalyzes slow GTP hydrolysis, GTPase activity is stimulated by the 30S ribosomal subunit. This Clostridium botulinum (strain ATCC 19397 / Type A) protein is Small ribosomal subunit biogenesis GTPase RsgA.